We begin with the raw amino-acid sequence, 95 residues long: Small ribosomal subunit protein uS19 (95 aa).

Belongs to the universal ribosomal protein uS19 family.

In terms of biological role, protein S19 forms a complex with S13 that binds strongly to the 16S ribosomal RNA. This chain is Small ribosomal subunit protein uS19, found in Thermodesulfovibrio yellowstonii (strain ATCC 51303 / DSM 11347 / YP87).